The following is an 82-amino-acid chain: UPF0180 protein BALH_1248 (82 aa).

It belongs to the UPF0180 family.

The sequence is that of UPF0180 protein BALH_1248 from Bacillus thuringiensis (strain Al Hakam).